A 369-amino-acid chain; its full sequence is Pyrimidine monooxygenase RutA (369 aa).

FMN is bound by residues 49–50 (IK), N115, E124, 140–141 (RY), and S190.

It belongs to the NtaA/SnaA/DszA monooxygenase family. RutA subfamily.

The enzyme catalyses uracil + FMNH2 + NADH + O2 = (Z)-3-ureidoacrylate + FMN + NAD(+) + H2O + H(+). The catalysed reaction is thymine + FMNH2 + NADH + O2 = (Z)-2-methylureidoacrylate + FMN + NAD(+) + H2O + H(+). In terms of biological role, catalyzes the pyrimidine ring opening between N-3 and C-4 by an unusual flavin hydroperoxide-catalyzed mechanism, adding oxygen atoms in the process to yield ureidoacrylate peracid, that immediately reacts with FMN forming ureidoacrylate and FMN-N(5)-oxide. The FMN-N(5)-oxide reacts spontaneously with NADH to produce FMN. Requires the flavin reductase RutF to regenerate FMN in vivo. This chain is Pyrimidine monooxygenase RutA, found in Acinetobacter baylyi (strain ATCC 33305 / BD413 / ADP1).